Reading from the N-terminus, the 74-residue chain is U3-agatoxin-Ao1d (74 aa).

A signal peptide spans 1–20; it reads MKAAISLLLLSALLFVVIEA. Positions 21-34 are excised as a propeptide; the sequence is ITYEEGKELFQGER. Disulfide bonds link Cys37–Cys53, Cys44–Cys58, Cys52–Cys68, and Cys60–Cys66. Ser72 is modified (serine amide).

The protein belongs to the neurotoxin 07 (Beta/delta-agtx) family. 02 (aga-3) subfamily. Expressed by the venom gland.

The protein localises to the secreted. Insecticidal neurotoxin that induces an irreversible spastic paralysis when injected into insects. Modifies presynaptic voltage-gated sodium channels (Nav), causing them to open at the normal resting potential of the nerve. This leads to spontaneous release of neurotransmitter and repetitive action potentials in motor neurons. The chain is U3-agatoxin-Ao1d from Agelena orientalis (Funnel-web spider).